Reading from the N-terminus, the 113-residue chain is Protein FAM27E3 (113 aa).

Residues 1–113 (MGIFQLLRDR…YTHRHTHRVL (113 aa)) are disordered. A compositionally biased stretch (basic and acidic residues) spans 77-99 (QTDRERERNTQRLRDRERRENGR). A compositionally biased stretch (basic residues) spans 100-113 (HTHTYTHRHTHRVL).

It belongs to the FAM27 family.

The chain is Protein FAM27E3 (FAM27E3) from Homo sapiens (Human).